The following is a 508-amino-acid chain: Ankyrin repeat domain-containing protein 34B (508 aa).

ANK repeat units lie at residues 9–38 (TDGN…YINE), 42–79 (RGET…DPNI), 83–113 (SGKS…DLSL), and 117–146 (SGYS…AKGK). Positions 157–185 (PSGRHTTQHHLNMPPADMDGSHPPATPSE) are disordered. Position 260 is a phosphoserine (Ser260). A Phosphothreonine modification is found at Thr269. Residue Ser293 is modified to Phosphoserine. Polar residues predominate over residues 361 to 370 (GANHYSSDSQ). The tract at residues 361–380 (GANHYSSDSQLAEGVTPPTV) is disordered.

Belongs to the ANKRD34 family. Phosphorylated. As to expression, specifically and constitutively expressed in brain (at protein level).

It localises to the cytoplasm. It is found in the nucleus. This is Ankyrin repeat domain-containing protein 34B (Ankrd34b) from Mus musculus (Mouse).